The sequence spans 2801 residues: Neurobeachin-like protein 2 (2801 aa).

Residues arginine 1379 to alanine 1529 form a disordered region. Acidic residues predominate over residues glutamate 1383 to aspartate 1393. Polar residues-rich tracts occupy residues aspartate 1400–asparagine 1413, glycine 1424–valine 1437, lysine 1470–glutamate 1481, and serine 1500–glutamine 1528. A BEACH-type PH domain is found at serine 1986 to leucine 2086. In terms of domain architecture, BEACH spans arginine 2099 to arginine 2391. 7 WD repeats span residues leucine 2431 to proline 2468, arginine 2492 to lysine 2535, leucine 2538 to valine 2575, arginine 2588 to valine 2626, tryptophan 2633 to leucine 2676, threonine 2684 to leucine 2719, and alanine 2727 to glycine 2762.

The protein belongs to the WD repeat neurobeachin family.

It localises to the endoplasmic reticulum. Involved in thrombopoiesis. Plays a role in the development or secretion of alpha-granules, that contain several growth factors important for platelet biogenesis. The protein is Neurobeachin-like protein 2 (nbeal2) of Danio rerio (Zebrafish).